Consider the following 838-residue polypeptide: Histidine biosynthesis trifunctional protein (838 aa).

Residues Met1–Phe271 form a phosphoribosyl-AMP cyclohydrolase region. The segment at Cys272–Lys360 is phosphoribosyl-ATP pyrophosphohydrolase. The tract at residues His361–Lys838 is histidinol dehydrogenase. Positions 660 and 663 each coordinate Zn(2+). Residues Glu729 and His730 contribute to the active site. 2 residues coordinate Zn(2+): Asp764 and His823.

It in the C-terminal section; belongs to the histidinol dehydrogenase family. It depends on Zn(2+) as a cofactor.

It catalyses the reaction 1-(5-phospho-beta-D-ribosyl)-5'-AMP + H2O = 1-(5-phospho-beta-D-ribosyl)-5-[(5-phospho-beta-D-ribosylamino)methylideneamino]imidazole-4-carboxamide. It carries out the reaction 1-(5-phospho-beta-D-ribosyl)-ATP + H2O = 1-(5-phospho-beta-D-ribosyl)-5'-AMP + diphosphate + H(+). The enzyme catalyses L-histidinol + 2 NAD(+) + H2O = L-histidine + 2 NADH + 3 H(+). The protein operates within amino-acid biosynthesis; L-histidine biosynthesis; L-histidine from 5-phospho-alpha-D-ribose 1-diphosphate: step 2/9. It participates in amino-acid biosynthesis; L-histidine biosynthesis; L-histidine from 5-phospho-alpha-D-ribose 1-diphosphate: step 3/9. It functions in the pathway amino-acid biosynthesis; L-histidine biosynthesis; L-histidine from 5-phospho-alpha-D-ribose 1-diphosphate: step 9/9. This chain is Histidine biosynthesis trifunctional protein (HIS4), found in Candida albicans (Yeast).